We begin with the raw amino-acid sequence, 395 residues long: Lipoyl synthase, mitochondrial (395 aa).

Residues 1 to 24 (MVKLPSASRIRSLATVPSTATRAF) constitute a mitochondrion transit peptide. The [4Fe-4S] cluster site is built by Cys-107, Cys-112, Cys-118, Cys-137, Cys-141, Cys-144, and Ser-357. In terms of domain architecture, Radical SAM core spans 122–346 (GKGNATATIM…KNVAEGMGFL (225 aa)).

It belongs to the radical SAM superfamily. Lipoyl synthase family. [4Fe-4S] cluster serves as cofactor.

The protein resides in the mitochondrion. The enzyme catalyses [[Fe-S] cluster scaffold protein carrying a second [4Fe-4S](2+) cluster] + N(6)-octanoyl-L-lysyl-[protein] + 2 oxidized [2Fe-2S]-[ferredoxin] + 2 S-adenosyl-L-methionine + 4 H(+) = [[Fe-S] cluster scaffold protein] + N(6)-[(R)-dihydrolipoyl]-L-lysyl-[protein] + 4 Fe(3+) + 2 hydrogen sulfide + 2 5'-deoxyadenosine + 2 L-methionine + 2 reduced [2Fe-2S]-[ferredoxin]. The protein operates within protein modification; protein lipoylation via endogenous pathway; protein N(6)-(lipoyl)lysine from octanoyl-[acyl-carrier-protein]: step 2/2. Its function is as follows. Catalyzes the radical-mediated insertion of two sulfur atoms into the C-6 and C-8 positions of the octanoyl moiety bound to the lipoyl domains of lipoate-dependent enzymes, thereby converting the octanoylated domains into lipoylated derivatives. This chain is Lipoyl synthase, mitochondrial, found in Cryptococcus neoformans var. neoformans serotype D (strain B-3501A) (Filobasidiella neoformans).